We begin with the raw amino-acid sequence, 726 residues long: Probable dipeptidyl-peptidase 5 (726 aa).

Positions 1–19 (MAAAKWLIASLAFASSGLA) are cleaved as a signal peptide. Residues Asn-96 and Asn-252 are each glycosylated (N-linked (GlcNAc...) asparagine). The interval 269 to 291 (AEPINKRNGPRTPQGIEGASSSP) is disordered. Residue Asn-485 is glycosylated (N-linked (GlcNAc...) asparagine). Ser-558 functions as the Charge relay system in the catalytic mechanism. N-linked (GlcNAc...) asparagine glycosylation is present at Asn-605. Active-site charge relay system residues include Asp-641 and His-673. Asn-699 carries N-linked (GlcNAc...) asparagine glycosylation.

The protein belongs to the peptidase S9C family.

The protein resides in the secreted. Functionally, extracellular dipeptidyl-peptidase which removes N-terminal dipeptides sequentially from polypeptides having unsubstituted N-termini. Contributes to pathogenicity. The chain is Probable dipeptidyl-peptidase 5 (DPP5) from Arthroderma benhamiae (strain ATCC MYA-4681 / CBS 112371) (Trichophyton mentagrophytes).